The primary structure comprises 303 residues: Elongation factor Ts (303 aa).

The segment at 80-83 is involved in Mg(2+) ion dislocation from EF-Tu; sequence TDFV.

It belongs to the EF-Ts family.

The protein localises to the cytoplasm. Associates with the EF-Tu.GDP complex and induces the exchange of GDP to GTP. It remains bound to the aminoacyl-tRNA.EF-Tu.GTP complex up to the GTP hydrolysis stage on the ribosome. In Clostridium perfringens (strain SM101 / Type A), this protein is Elongation factor Ts.